The sequence spans 321 residues: Geranylgeranyl transferase type-2 subunit beta 1 (321 aa).

An N-acetylserine modification is found at S2. PFTB repeat units follow at residues 14–55 (ADKH…DLLD), 62–103 (EEEV…ALFD), 110–151 (IGKV…SILK), 158–199 (VEKA…AITG), 206–247 (KDSL…IMID), and 254–296 (KAKL…SLLE). Geranylgeranyl diphosphate-binding positions include 184 to 186 (HAG) and 226 to 229 (RPEK). Zn(2+) contacts are provided by D232 and C234. 235–238 (YSWW) contacts geranylgeranyl diphosphate. H284 contacts Zn(2+).

Belongs to the protein prenyltransferase subunit beta family. Heterotrimer composed of the alpha subunit RGTA, the beta subunit RGTB and REP; within this trimer, RGTA and RGTB form the catalytic component, while REP mediates peptide substrate binding. The cofactor is Zn(2+). Mg(2+) is required as a cofactor.

The enzyme catalyses geranylgeranyl diphosphate + L-cysteinyl-[protein] = S-geranylgeranyl-L-cysteinyl-[protein] + diphosphate. With respect to regulation, the enzymatic reaction requires the aid of the Rab escort protein REP. Its function is as follows. Catalyzes the transfer of a geranylgeranyl moiety from geranylgeranyl diphosphate to both cysteines of Rab proteins with the C-terminal sequence -CCXX, CXXX, -XCCX and -XCXC, such as RABA1A, RABA2A, RABF2A and RABG2. Involved in the geranylgeranylation of RABA2A. In vitro, can prenylate PGGTI targets with the C-terminal sequence Cys-aliphatic-aliphatic-X (CaaX) with leucine in the terminal position. Substrates with the C-terminal sequence -CSIL such as ARAC11/ROP1 or GG2/AGG2 are prenylated independently of REP and when the beta subunit is associated with the alpha subunit RGTA1. Functionally, required for male fertility and root tip growth. In Arabidopsis thaliana (Mouse-ear cress), this protein is Geranylgeranyl transferase type-2 subunit beta 1.